The primary structure comprises 116 residues: Protein Rev (116 aa).

Ser5 and Ser8 each carry phosphoserine; by host CK2. Residues 18–26 (LIKFLYQSN) are homomultimerization. The interval 23–48 (YQSNPPPNPEGTRQARRNRRRRWRER) is disordered. A Nuclear localization signal and RNA-binding (RRE) motif is present at residues 34–50 (TRQARRNRRRRWRERQR). Residues 36 to 48 (QARRNRRRRWRER) show a composition bias toward basic residues. The Nuclear export signal and binding to XPO1 motif lies at 73–84 (LQLPPLERLNLD). A disordered region spans residues 90–116 (GTSGTQGVGSPEILVESPAVLEPGTKE). Residues Ser92 and Ser99 each carry the phosphoserine; by host modification.

It belongs to the HIV-1 REV protein family. Homomultimer; when bound to the RRE. Multimeric assembly is essential for activity and may involve XPO1. Binds to human KPNB1, XPO1, TNPO1, RANBP5 and IPO7. Interacts with the viral Integrase. Interacts with human KHDRBS1. Interacts with human NAP1; this interaction decreases Rev multimerization and stimulates its activity. Interacts with human DEAD-box helicases DDX3 and DDX24; these interactions may serve for viral RNA export to the cytoplasm and packaging, respectively. Interacts with human PSIP1; this interaction may inhibit HIV-1 DNA integration by promoting dissociation of the Integrase-LEDGF/p75 complex. Post-translationally, asymmetrically arginine dimethylated at one site by host PRMT6. Methylation impairs the RNA-binding activity and export of viral RNA from the nucleus to the cytoplasm. In terms of processing, phosphorylated by protein kinase CK2. Presence of, and maybe binding to the N-terminus of the regulatory beta subunit of CK2 is necessary for CK2-mediated Rev's phosphorylation.

It localises to the host nucleus. Its subcellular location is the host nucleolus. It is found in the host cytoplasm. Functionally, escorts unspliced or incompletely spliced viral pre-mRNAs (late transcripts) out of the nucleus of infected cells. These pre-mRNAs carry a recognition sequence called Rev responsive element (RRE) located in the env gene, that is not present in fully spliced viral mRNAs (early transcripts). This function is essential since most viral proteins are translated from unspliced or partially spliced pre-mRNAs which cannot exit the nucleus by the pathway used by fully processed cellular mRNAs. Rev itself is translated from a fully spliced mRNA that readily exits the nucleus. Rev's nuclear localization signal (NLS) binds directly to KPNB1/Importin beta-1 without previous binding to KPNA1/Importin alpha-1. KPNB1 binds to the GDP bound form of RAN (Ran-GDP) and targets Rev to the nucleus. In the nucleus, the conversion from Ran-GDP to Ran-GTP dissociates Rev from KPNB1 and allows Rev's binding to the RRE in viral pre-mRNAs. Rev multimerization on the RRE via cooperative assembly exposes its nuclear export signal (NES) to the surface. Rev can then form a complex with XPO1/CRM1 and Ran-GTP, leading to nuclear export of the complex. Conversion from Ran-GTP to Ran-GDP mediates dissociation of the Rev/RRE/XPO1/RAN complex, so that Rev can return to the nucleus for a subsequent round of export. Beside KPNB1, also seems to interact with TNPO1/Transportin-1, RANBP5/IPO5 and IPO7/RANBP7 for nuclear import. The nucleoporin-like HRB/RIP is an essential cofactor that probably indirectly interacts with Rev to release HIV RNAs from the perinuclear region to the cytoplasm. The chain is Protein Rev from Human immunodeficiency virus type 1 group M subtype B (isolate OYI) (HIV-1).